Reading from the N-terminus, the 391-residue chain is MGLEHLEEFSYPKEHGEEVEYDSEQGVRKIYVKSIKETFNFDNVSEEEKQEGGDYYLGKKEDELDEVVLRPNPHRFVLFPIKYHEIWQFYKKAEASFWTAEEIDLSKDLVDWDNKLNADERYFISTVLAYFAASDGIVNENLLERFSSEVQIPEARCVYGFQIMIENIHSETYSLLLDTYIREPKEKQRHFDAILTMGSIKAKAKWALRWINDEDSTYAIRLVAFAAVEGIFFSGSFASIFWLKKRGLMPGLTFSNELICRDEGLHTDFACLMFSHLKHRPGRKVVEAIIVEAVDIEKEYFTDALPVSLLGMNKDLMCQYIEFVADRLLVALGNDKYYNVTNPFDFMENISLAGKTNFFEKKVSDYQIAGVMSGTKRAEKDDHTFTIDEDF.

Residues D135, E166, and H169 each coordinate Fe cation. Y173 is an active-site residue. Residues E229, E263, and H266 each coordinate Fe cation.

Belongs to the ribonucleoside diphosphate reductase small chain family. Heterodimer of a large and a small subunit. Fe cation is required as a cofactor.

The protein localises to the nucleus. Its subcellular location is the cytoplasm. It catalyses the reaction a 2'-deoxyribonucleoside 5'-diphosphate + [thioredoxin]-disulfide + H2O = a ribonucleoside 5'-diphosphate + [thioredoxin]-dithiol. Functionally, provides the precursors necessary for DNA synthesis. Catalyzes the biosynthesis of deoxyribonucleotides from the corresponding ribonucleotides. This is Ribonucleoside-diphosphate reductase small chain (suc22) from Schizosaccharomyces pombe (strain 972 / ATCC 24843) (Fission yeast).